The sequence spans 297 residues: N-acetylmuramic acid 6-phosphate etherase (297 aa).

In terms of domain architecture, SIS spans 56 to 219; it reads AIEAFNKGGR…STISMIGIGK (164 aa). The active-site Proton donor is the Glu-84. Glu-115 is a catalytic residue.

Belongs to the GCKR-like family. MurNAc-6-P etherase subfamily. In terms of assembly, homodimer.

It catalyses the reaction N-acetyl-D-muramate 6-phosphate + H2O = N-acetyl-D-glucosamine 6-phosphate + (R)-lactate. It functions in the pathway amino-sugar metabolism; N-acetylmuramate degradation. Functionally, specifically catalyzes the cleavage of the D-lactyl ether substituent of MurNAc 6-phosphate, producing GlcNAc 6-phosphate and D-lactate. This Lactococcus lactis subsp. cremoris (strain SK11) protein is N-acetylmuramic acid 6-phosphate etherase.